Reading from the N-terminus, the 318-residue chain is MALNRLRIGTRASQLALWQANWVKSELEKRYPGMEVELVKIKTIGDKILDVPLAQVGGKGLFVKEIEEAMLRGEIDIAVHSMKDVPTEFPEGLGLVCITEREDPRDAFISNGVTFANLPQGAKIGTSALRRQAQLLKVRPDLEMVIIRGNVETRIRKLTEDKLDAVILAAAGLKRLGFTDVVTEYLPVDLSLPAIGQGALGLECRLDDQAVRETIDFFNHPDTAHAVRAERALLWRCEGGCQVPIAAHGQVSGDSLTLTGFIASVDGTRSVKESISGPVTDCEKLGIALAEKLLADGGHEILAEVYQREVSREKEIPV.

Residue Cys241 is modified to S-(dipyrrolylmethanemethyl)cysteine.

The protein belongs to the HMBS family. In terms of assembly, monomer. Dipyrromethane serves as cofactor.

It carries out the reaction 4 porphobilinogen + H2O = hydroxymethylbilane + 4 NH4(+). It participates in porphyrin-containing compound metabolism; protoporphyrin-IX biosynthesis; coproporphyrinogen-III from 5-aminolevulinate: step 2/4. Functionally, tetrapolymerization of the monopyrrole PBG into the hydroxymethylbilane pre-uroporphyrinogen in several discrete steps. This is Porphobilinogen deaminase from Geobacter sulfurreducens (strain ATCC 51573 / DSM 12127 / PCA).